The chain runs to 309 residues: Olfactory receptor 4B1 (309 aa).

Topologically, residues 1–23 (MASTSNVTELIFTGLFQDPAVQS) are extracellular. N-linked (GlcNAc...) asparagine glycosylation is present at asparagine 6. A helical transmembrane segment spans residues 24-47 (VCFVVFLPVYLATVVGNGLIVLTV). Residues 48-55 (SISKSLDS) are Cytoplasmic-facing. The helical transmembrane segment at 56–77 (PMYFFLSCLSLVEISYSSTIAP) threads the bilayer. At 78–98 (KFIIDLLAKIKTISLEGCLTQ) the chain is on the extracellular side. A disulfide bridge connects residues cysteine 95 and cysteine 187. A helical transmembrane segment spans residues 99–118 (IFFFHFFGVAEILLIVVMAY). Residues 119–137 (DCYVAICKPLHYMNIISRQ) lie on the Cytoplasmic side of the membrane. A helical transmembrane segment spans residues 138-156 (LCHLLVAGSWLGGFCHSII). Over 157 to 193 (QILVIIQLPFCGPNVIDHYFCDLQPLFKLACTDTFME) the chain is Extracellular. Residues 194–217 (GVIVLANSGLFSVFSFLILVSSYI) traverse the membrane as a helical segment. Over 218-233 (VILVNLRNHSAEGRHK) the chain is Cytoplasmic. A helical membrane pass occupies residues 234–256 (ALSTCASHITVVILFFGPAIFLY). The Extracellular segment spans residues 257–267 (MRPSSTFTEDK). A helical transmembrane segment spans residues 268-287 (LVAVFYTVITPMLNPIIYTL). The Cytoplasmic portion of the chain corresponds to 288–309 (RNAEVKIAIRRLWSKKENPGRE).

This sequence belongs to the G-protein coupled receptor 1 family.

It is found in the cell membrane. Odorant receptor. This Homo sapiens (Human) protein is Olfactory receptor 4B1 (OR4B1).